Consider the following 368-residue polypeptide: Peptide chain release factor 2 (368 aa).

Residue Gln-250 is modified to N5-methylglutamine.

The protein belongs to the prokaryotic/mitochondrial release factor family. Post-translationally, methylated by PrmC. Methylation increases the termination efficiency of RF2.

It localises to the cytoplasm. Its function is as follows. Peptide chain release factor 2 directs the termination of translation in response to the peptide chain termination codons UGA and UAA. The polypeptide is Peptide chain release factor 2 (Rickettsia felis (strain ATCC VR-1525 / URRWXCal2) (Rickettsia azadi)).